The chain runs to 98 residues: NADH-ubiquinone oxidoreductase chain 4L (98 aa).

3 helical membrane passes run 1 to 21 (MIPT…GMLT), 27 to 47 (VASL…ATLI), and 61 to 81 (IILL…LISI).

This sequence belongs to the complex I subunit 4L family. As to quaternary structure, core subunit of respiratory chain NADH dehydrogenase (Complex I) which is composed of 45 different subunits.

It localises to the mitochondrion inner membrane. The enzyme catalyses a ubiquinone + NADH + 5 H(+)(in) = a ubiquinol + NAD(+) + 4 H(+)(out). In terms of biological role, core subunit of the mitochondrial membrane respiratory chain NADH dehydrogenase (Complex I) which catalyzes electron transfer from NADH through the respiratory chain, using ubiquinone as an electron acceptor. Part of the enzyme membrane arm which is embedded in the lipid bilayer and involved in proton translocation. The protein is NADH-ubiquinone oxidoreductase chain 4L (MT-ND4L) of Macaca hecki (Heck's macaque).